The chain runs to 695 residues: MAP kinase phosphatase with leucine-rich repeats protein 2 (695 aa).

10 LRR repeats span residues 101–122, 124–145, 147–167, 170–191, 193–214, 215–235, 239–260, 262–283, 286–307, and 309–330; these read SLKS…ITLL, NLNH…LSQL, SLET…NVCK, SLTS…FLNL, NLKD…LPNN, IEKL…SLIR, SLTT…LSCL, NVKT…VLGS, SLVT…VILL, and NLRI…IPTE. Residues 413–426 are compositionally biased toward low complexity; the sequence is SENNEINENNQLLT. 2 disordered regions span residues 413-438 and 492-519; these read SENN…KNDS and QEQL…QQQQ. The region spanning 556 to 695 is the Tyrosine-protein phosphatase domain; sequence VPDLIIDKLY…LKKFEKDLFK (140 aa). The active-site Phosphocysteine intermediate is the Cys-639.

Belongs to the protein-tyrosine phosphatase family. Non-receptor class dual specificity subfamily.

It catalyses the reaction O-phospho-L-tyrosyl-[protein] + H2O = L-tyrosyl-[protein] + phosphate. The catalysed reaction is O-phospho-L-seryl-[protein] + H2O = L-seryl-[protein] + phosphate. The enzyme catalyses O-phospho-L-threonyl-[protein] + H2O = L-threonyl-[protein] + phosphate. Its function is as follows. Probable phosphatase with dual specificity toward Ser/Thr and Tyr-containing proteins. The protein is MAP kinase phosphatase with leucine-rich repeats protein 2 (mpl2) of Dictyostelium discoideum (Social amoeba).